Consider the following 739-residue polypeptide: MEHTYQYTLIIPFALLPVPMLIGVALIFFPTATKNVRRMWAFPSVLLLSIVMIFSFNLSIQQINGSSIYQYVCSWTINNDFSFEFGLLIDSLTSIMLILITTVGILVLIYSDNYMSHDQGYLRFFAYMSFSNISMLGLVTSSNLIQIHIFWELVGVCSYLLIGFWFTRPIAANACQKAFVTNRVGDFGLLLGILGFYWITGSFEFRDLFEIFNNLIYNNQVNSLFVILCASLLFVGAVAKSAQFPLHVWLPDAMEGPTPISALIHAATMVAAGIFLVARLLPLFTVIPYIMNIISLIGIITILLGATLALTQKDIKRSLAYSTMSQLGYIMLALGMGSYRAALFHLITHAYSKALLFLGSGSIIHSMESIVGYSPDKSQNMILMGGLKKYVPITKTAFFLGTLSLCGIPPLACFWSKDEIINDSWLYSPIFAIIACSTAGLTAFYMFRTYLLTFEGHLNVNLKNYSGKKTSSFYSICLWGKEGSKTIKKNYCLSTINNNEGDSFFSKNTYPMDGNVRNMTRPFITITHFDNKETFSYPHESDNNMLFPLLVLVLFTFFVGSIGIPFDQGRMDLDILSKWLTPSINLLHTNSNNSFDWYEFVKNSIFSVSIAYFGIFISSFLYRPIYSSLQNLELINSFVKMGPKRSLWDKIINVIYNWSYNRGYIDFFYSIALTRSIRVISELTHFFDRRVIDGITNGVGVTSFFVGEGVRYVGSGRISSYLFLYLFSVSIFFLIFQVL.

16 consecutive transmembrane segments (helical) span residues 9–29, 40–60, 89–109, 125–145, 147–167, 185–205, 224–244, 258–278, 283–303, 327–347, 354–374, 396–416, 425–445, 546–566, 605–625, and 718–738; these read LIIP…LIFF, WAFP…NLSI, IDSL…LVLI, FAYM…SNLI, IHIF…FWFT, GDFG…SFEF, LFVI…SAQF, TPIS…FLVA, LFTV…ITIL, LGYI…FHLI, ALLF…VGYS, TAFF…CFWS, WLYS…TAFY, LFPL…GIPF, IFSV…YRPI, and ISSY…IFQV.

This sequence belongs to the complex I subunit 5 family. In terms of assembly, NDH is composed of at least 16 different subunits, 5 of which are encoded in the nucleus.

Its subcellular location is the plastid. It is found in the chloroplast thylakoid membrane. It carries out the reaction a plastoquinone + NADH + (n+1) H(+)(in) = a plastoquinol + NAD(+) + n H(+)(out). The enzyme catalyses a plastoquinone + NADPH + (n+1) H(+)(in) = a plastoquinol + NADP(+) + n H(+)(out). In terms of biological role, NDH shuttles electrons from NAD(P)H:plastoquinone, via FMN and iron-sulfur (Fe-S) centers, to quinones in the photosynthetic chain and possibly in a chloroplast respiratory chain. The immediate electron acceptor for the enzyme in this species is believed to be plastoquinone. Couples the redox reaction to proton translocation, and thus conserves the redox energy in a proton gradient. The sequence is that of NAD(P)H-quinone oxidoreductase subunit 5, chloroplastic (ndhF) from Buxus microphylla (Littleleaf boxwood).